The chain runs to 55 residues: Large ribosomal subunit protein bL33 (55 aa).

This sequence belongs to the bacterial ribosomal protein bL33 family.

The sequence is that of Large ribosomal subunit protein bL33 from Erythrobacter litoralis (strain HTCC2594).